Reading from the N-terminus, the 415-residue chain is uncharacterized protein (415 aa).

A run of 10 helical transmembrane segments spans residues 20–40, 43–63, 78–98, 109–129, 155–175, 243–263, 300–320, 328–348, 360–380, and 388–408; these read MAYL…FGIL, LMPI…PAIA, IPIL…TPYI, LPNI…VIAF, VILV…LSIS, IVIM…SSLI, IFSS…LIAF, GILC…YTLI, ISFY…LILV, and GSLA…FAIL.

The protein belongs to the polysaccharide synthase family.

Its subcellular location is the cell membrane. This is an uncharacterized protein from Methanocaldococcus jannaschii (strain ATCC 43067 / DSM 2661 / JAL-1 / JCM 10045 / NBRC 100440) (Methanococcus jannaschii).